Here is an 81-residue protein sequence, read N- to C-terminus: ATP synthase subunit c (81 aa).

2 helical membrane-spanning segments follow: residues 7–27 and 53–73; these read FVAL…CIGI and FLLA…AMMF.

The protein belongs to the ATPase C chain family. F-type ATPases have 2 components, F(1) - the catalytic core - and F(0) - the membrane proton channel. F(1) has five subunits: alpha(3), beta(3), gamma(1), delta(1), epsilon(1). F(0) has three main subunits: a(1), b(2) and c(10-14). The alpha and beta chains form an alternating ring which encloses part of the gamma chain. F(1) is attached to F(0) by a central stalk formed by the gamma and epsilon chains, while a peripheral stalk is formed by the delta and b chains.

It localises to the cell inner membrane. In terms of biological role, f(1)F(0) ATP synthase produces ATP from ADP in the presence of a proton or sodium gradient. F-type ATPases consist of two structural domains, F(1) containing the extramembraneous catalytic core and F(0) containing the membrane proton channel, linked together by a central stalk and a peripheral stalk. During catalysis, ATP synthesis in the catalytic domain of F(1) is coupled via a rotary mechanism of the central stalk subunits to proton translocation. Functionally, key component of the F(0) channel; it plays a direct role in translocation across the membrane. A homomeric c-ring of between 10-14 subunits forms the central stalk rotor element with the F(1) delta and epsilon subunits. In Azoarcus sp. (strain BH72), this protein is ATP synthase subunit c.